Consider the following 444-residue polypeptide: Tubulin beta-9 chain (444 aa).

GTP contacts are provided by glutamine 11, glutamate 69, serine 138, glycine 142, threonine 143, glycine 144, asparagine 204, and asparagine 226. Residue glutamate 69 participates in Mg(2+) binding.

It belongs to the tubulin family. As to quaternary structure, dimer of alpha and beta chains. A typical microtubule is a hollow water-filled tube with an outer diameter of 25 nm and an inner diameter of 15 nM. Alpha-beta heterodimers associate head-to-tail to form protofilaments running lengthwise along the microtubule wall with the beta-tubulin subunit facing the microtubule plus end conferring a structural polarity. Microtubules usually have 13 protofilaments but different protofilament numbers can be found in some organisms and specialized cells. Interacts with TFCA. Requires Mg(2+) as cofactor.

The protein resides in the cytoplasm. It is found in the cytoskeleton. In terms of biological role, tubulin is the major constituent of microtubules, a cylinder consisting of laterally associated linear protofilaments composed of alpha- and beta-tubulin heterodimers. Microtubules grow by the addition of GTP-tubulin dimers to the microtubule end, where a stabilizing cap forms. Below the cap, tubulin dimers are in GDP-bound state, owing to GTPase activity of alpha-tubulin. In Arabidopsis thaliana (Mouse-ear cress), this protein is Tubulin beta-9 chain (TUBB9).